The chain runs to 286 residues: Pre-mRNA-processing protein 45 (286 aa).

Disordered regions lie at residues 111-146 (TNDINYIKYENPNPNPNPNPNPNQEQQQQSSSSSSK) and 253-286 (KQRNEIRQQKQLQEKRLRDEKIKEIANRSKRRRY). Over residues 132-145 (PNQEQQQQSSSSSS) the composition is skewed to low complexity. Basic and acidic residues predominate over residues 253-279 (KQRNEIRQQKQLQEKRLRDEKIKEIAN).

This sequence belongs to the SNW family. Associated with the spliceosome.

Its subcellular location is the nucleus. Functionally, involved in pre-mRNA splicing. This is Pre-mRNA-processing protein 45 (PRP45) from Candida albicans (strain SC5314 / ATCC MYA-2876) (Yeast).